The sequence spans 318 residues: Pantothenate kinase (318 aa).

Residue 96 to 103 coordinates ATP; that stretch reads GSVAVGKS.

It belongs to the prokaryotic pantothenate kinase family.

Its subcellular location is the cytoplasm. The enzyme catalyses (R)-pantothenate + ATP = (R)-4'-phosphopantothenate + ADP + H(+). It functions in the pathway cofactor biosynthesis; coenzyme A biosynthesis; CoA from (R)-pantothenate: step 1/5. In Rhodopseudomonas palustris (strain HaA2), this protein is Pantothenate kinase.